Here is a 684-residue protein sequence, read N- to C-terminus: Extracellular lipase (684 aa).

The N-terminal stretch at 1–48 is a signal peptide; that stretch reads MKKKLIYAAVVSALLAGCGGSDDNKGDTSSYLDYLLTGSNAVGPSALA. 2 disordered regions span residues 321-405 and 462-493; these read SIPV…ADWG and QRER…GDRS. Basic and acidic residues predominate over residues 385-405; it reads ADCRSDPPERAAGRGEQADWG. The active-site Nucleophile is serine 568.

This sequence belongs to the AB hydrolase superfamily. Lipase family. As to quaternary structure, monomer.

The protein localises to the secreted. The catalysed reaction is a triacylglycerol + H2O = a diacylglycerol + a fatty acid + H(+). Its function is as follows. The optimum chain lengths for the acyl moiety is C6 for ester hydrolysis and C6 and C8 for triacylglycerol hydrolysis. In Aeromonas hydrophila, this protein is Extracellular lipase.